The sequence spans 1111 residues: Serine/threonine-protein kinase Nek10 (1111 aa).

A compositionally biased stretch (basic and acidic residues) spans 1–16 (MPDQDTKAKSTEKTAD). 2 disordered regions span residues 1-24 (MPDQDTKAKSTEKTADKQQGTTTR) and 47-72 (AINFDSAQNNMTKSEPTIRTGGHRAR). Over residues 47-63 (AINFDSAQNNMTKSEPT) the composition is skewed to polar residues. Residues 481–514 (YKDLVSQLNLLLEDELKQIAENIESINQKKAPLK) are a coiled coil. A Protein kinase domain is found at 519 to 791 (YAVLDHLGSG…MISDVMMKYL (273 aa)). ATP contacts are provided by residues 525–533 (LGSGAFGCV) and Lys-548. Asp-655 (proton acceptor) is an active-site residue.

It belongs to the protein kinase superfamily. NEK Ser/Thr protein kinase family. NIMA subfamily. As to quaternary structure, interacts with RAF1 and MAP2K1; the interaction is direct with RAF1 and required for ERK1/2-signaling pathway activation in response to UV irradiation. Requires Mg(2+) as cofactor. In terms of tissue distribution, expressed in the mammary gland, lung, spleen, and kidney.

It catalyses the reaction L-seryl-[protein] + ATP = O-phospho-L-seryl-[protein] + ADP + H(+). The enzyme catalyses L-threonyl-[protein] + ATP = O-phospho-L-threonyl-[protein] + ADP + H(+). Functionally, plays a role in the cellular response to UV irradiation. Mediates G2/M cell cycle arrest, MEK autoactivation and ERK1/2-signaling pathway activation in response to UV irradiation. In ciliated cells, it is involved in the regulation of mucociliary transport. In Mus musculus (Mouse), this protein is Serine/threonine-protein kinase Nek10.